The sequence spans 86 residues: Large ribosomal subunit protein bL31 (86 aa).

The tract at residues 65-86 (YGMGSANSATSKEQKEEKDSKK) is disordered. The segment covering 76 to 86 (KEQKEEKDSKK) has biased composition (basic and acidic residues).

Belongs to the bacterial ribosomal protein bL31 family. Type A subfamily. As to quaternary structure, part of the 50S ribosomal subunit.

In terms of biological role, binds the 23S rRNA. The sequence is that of Large ribosomal subunit protein bL31 from Prochlorococcus marinus (strain AS9601).